A 90-amino-acid chain; its full sequence is MSSLVYIAFQDNDNARYVVEAIIQDNPHAVVQHHPAMIRIEAEKRLEIRRETVEENLGRAWDVQEMLVDVITIGGNVDEDDDRFVLEWKN.

Belongs to the TmoD/XamoD family. In terms of assembly, active as a monomer. Formation of dimers inactivates the protein. The multicomponent enzyme phenol hydroxylase is formed by DmpL (P1 component), DmpM (P2 component), DmpN (P3 component), DmpO (P4 component) and DmpP (P5 component).

The enzyme catalyses phenol + NADH + O2 + H(+) = catechol + NAD(+) + H2O. It participates in aromatic compound metabolism; phenol degradation. In terms of biological role, part of a multicomponent enzyme which catalyzes the degradation of phenol and some of its methylated derivatives. DmpM is a regulatory subunit that stimulates the phenol hydroxylase activity of the complex. The steady-state rate of phenol hydroxylase turnover is dependent on the DmpM concentration, with a maximum observed rate at about 1.5 DmpM per oxygenase monomer. Higher concentrations of DmpM inhibit phenol hydroxylase activity. May act by altering the redox potential of the oxygenase. Required for growth on phenol and for in vitro phenol hydroxylase activity. The polypeptide is Phenol 2-monooxygenase, stimulatory component DmpM (Pseudomonas sp. (strain CF600)).